Here is a 594-residue protein sequence, read N- to C-terminus: MLYRPKIYTNYNIINGGTKSRLSSACYPIQCAVVNSSNAIIDRRSANFEPSIWSFDYIQSLTSQYKGEPYTSRVKKLERDVKKILVEMENSLAQLELIDTLQRLGISYRFENEINSILNKKYVNINNPNYNLYAIALEFRLLRQHGYAVPQEIFNQLKNEIENIKKNINGNDIMGILALYEASFYEKKCESILKEARIFTTECLKNYTIMISEQKKLMIDNDYDYDIEVVNHALELPLHRRTTRTEAKWFIDAYAKKQDMNPMLLELAKLDFNIVQSTHHEDLKHIFRWWRHTKLGEKLNFARDRLMECFLWNIGIRFESKFSYFRTKTAKLFELVTFIDDIYDVYGTLDELELFTKAVERWDVKMINELPEYMKMPYLVLHNTINDMVFEVLRDQEISINIQYLKKTWVDMCKSFLQEAKWYYSGYTPTLEEYIENGWISVGAPVILVHAYFFHANNNRTITNTKEIFECLEYGYYPAIIRHSAIILRFTNDLATSSEELKRGDAPTSIQCYMQEKIVSEEEAREHIKFLINEAWKEMNNDVGLYPISLTEDATNFAKMGFFIYQHGDGHSSQDNQSKQKISSLIIEPIPLYT.

Positions 303, 340, 344, 489, and 492 each coordinate (2E)-geranyl diphosphate. Mg(2+)-binding residues include aspartate 340 and aspartate 344. The DDXXD motif motif lies at 340-344 (DDIYD). Positions 492, 496, and 500 each coordinate Mg(2+).

Belongs to the terpene synthase family. Tpsb subfamily. It depends on Mg(2+) as a cofactor. The cofactor is Mn(2+). As to expression, expressed in glandular trichomes two to four weeks after flowering onset.

The enzyme catalyses (2E)-geranyl diphosphate = (E)-beta-ocimene + diphosphate. It carries out the reaction (2E)-geranyl diphosphate = (Z)-beta-ocimene + diphosphate. The protein operates within secondary metabolite biosynthesis; terpenoid biosynthesis. Its function is as follows. Involved in monoterpene (C10) olefins biosynthesis, constituants of cannabinoids and terpenoids-rich resins. Catalyzes mainly the conversion of (2E)-geranyl diphosphate to (E)-beta-ocimene, and also produces minor products such as (Z)-beta-ocimene. The chain is (E)-beta-ocimene synthase TPS6FN from Cannabis sativa (Hemp).